The sequence spans 214 residues: Dimethylamine corrinoid protein 2 (214 aa).

Residues 1 to 91 form the B12-binding N-terminal domain; sequence MATKEELIQE…DMPAGAATKK (91 aa). The 123-residue stretch at 92–214 folds into the B12-binding domain; it reads LGVIVNGTVE…AVAKAKELLL (123 aa). His-105 contacts methylcob(III)alamin.

It belongs to the methylamine corrinoid protein family.

It participates in one-carbon metabolism; methanogenesis from dimethylamine. Acts as a methyl group carrier between MtbB and MtbA. This Methanosarcina mazei (strain ATCC BAA-159 / DSM 3647 / Goe1 / Go1 / JCM 11833 / OCM 88) (Methanosarcina frisia) protein is Dimethylamine corrinoid protein 2 (mtbC2).